A 437-amino-acid chain; its full sequence is GTPase Obg (437 aa).

In terms of domain architecture, Obg spans 2 to 160 (SMFLDTAKIS…RQLELELKIL (159 aa)). Residues 161-338 (ADVGLVGFPS…LLEATAELLA (178 aa)) enclose the OBG-type G domain. GTP-binding positions include 167–174 (GFPSVGKS), 192–196 (FTTIV), 214–217 (DLPG), 284–287 (NKMD), and 319–321 (SSL). Mg(2+)-binding residues include Ser-174 and Thr-194. The region spanning 359-437 (GFAETEKNFE…IGKFEFEFVD (79 aa)) is the OCT domain.

Belongs to the TRAFAC class OBG-HflX-like GTPase superfamily. OBG GTPase family. As to quaternary structure, monomer. Mg(2+) serves as cofactor.

It localises to the cytoplasm. In terms of biological role, an essential GTPase which binds GTP, GDP and possibly (p)ppGpp with moderate affinity, with high nucleotide exchange rates and a fairly low GTP hydrolysis rate. Plays a role in control of the cell cycle, stress response, ribosome biogenesis and in those bacteria that undergo differentiation, in morphogenesis control. This is GTPase Obg from Streptococcus pyogenes serotype M49 (strain NZ131).